Here is a 725-residue protein sequence, read N- to C-terminus: Threonine--tRNA ligase, cytoplasmic (725 aa).

The TGS domain occupies 80–142; the sequence is EPIQITLPDG…EGNAKLELLK (63 aa).

The protein belongs to the class-II aminoacyl-tRNA synthetase family.

Its subcellular location is the cytoplasm. The enzyme catalyses tRNA(Thr) + L-threonine + ATP = L-threonyl-tRNA(Thr) + AMP + diphosphate + H(+). In Caenorhabditis elegans, this protein is Threonine--tRNA ligase, cytoplasmic.